Reading from the N-terminus, the 1883-residue chain is AF4/FMR2 family member lilli (1883 aa).

Over residues 1–45 (MAQQQQQQHLQQQQQQHHQQQQLQQLQQQQQLPQYNNNLYNLNYN) the composition is skewed to low complexity. Disordered regions lie at residues 1–88 (MAQQ…SEGD), 140–311 (INST…EKDI), 329–381 (SIAA…SCTT), 449–540 (MPTP…HHQH), 609–654 (LGGG…HLSR), 796–827 (SISS…TLQI), 844–901 (MQQK…KKHA), 922–962 (TAAA…LAKG), 992–1018 (VAGS…LHAA), 1039–1075 (TAAA…ATAT), 1115–1145 (KNNR…QHKQ), 1170–1238 (QHQQ…KSDK), 1358–1413 (YAAE…GART), 1450–1510 (EHGV…DQVS), 1543–1583 (ANGS…KATT), 1595–1641 (QTST…PPSD), and 1783–1803 (PSNS…RIVP). Residues 57 to 80 (REKYERQQGIQSDDRETSLFEAPR) are compositionally biased toward basic and acidic residues. 4 stretches are compositionally biased toward low complexity: residues 140–154 (INST…SLLP), 161–178 (QQQQ…QQQQ), 223–253 (SASS…ASTA), and 362–381 (PLNS…SCTT). Over residues 450–462 (PTPPKASPTPPTA) the composition is skewed to pro residues. Position 458 is a phosphothreonine (Thr-458). A compositionally biased stretch (basic and acidic residues) spans 466 to 479 (LKSEKNHSLEKQDS). Residues 481 to 491 (LENDLELSESD) are compositionally biased toward acidic residues. A phosphoserine mark is found at Ser-488 and Ser-490. Over residues 500–540 (SAGNSSNSSETDSSESGSEASSKGEAQQQQQQQQQLLHHQH) the composition is skewed to low complexity. A compositionally biased stretch (gly residues) spans 609 to 625 (LGGGGGSGSTGGGGGSS). Composition is skewed to low complexity over residues 626–639 (SSGM…SSSN) and 796–813 (SISS…SAAG). Over residues 867-877 (PRQKKPRKKKM) the composition is skewed to basic residues. 2 positions are modified to phosphoserine: Ser-887 and Ser-888. Positions 930–942 (KKGRGRPRKQQQQ) form a DNA-binding region, a.T hook. Low complexity predominate over residues 939 to 962 (QQQQLQQTQSGNLSSASAGSLAKG). Phosphoserine is present on residues Ser-953 and Ser-955. Low complexity-rich tracts occupy residues 1124 to 1145 (SSSN…QHKQ), 1170 to 1186 (QHQQ…QQQQ), 1200 to 1222 (SSSS…SSSS), 1362 to 1376 (QQQQ…QQLH), and 1385 to 1399 (HYQQ…KAQQ). Basic and acidic residues predominate over residues 1450–1467 (EHGVKPEPELDAGYEAKY). Ser-1546 is subject to Phosphoserine. Thr-1548 is modified (phosphothreonine). Composition is skewed to low complexity over residues 1558–1583 (QQQQ…KATT) and 1595–1606 (QTSTTATQQPTT). Over residues 1614–1625 (TPPPVAPPPPPR) the composition is skewed to pro residues. The segment covering 1783–1794 (PSNSVGSQGSGS) has biased composition (low complexity).

It belongs to the AF4 family.

The protein resides in the nucleus. Its function is as follows. Has a role in transcriptional regulation. Acts in parallel with the Ras/MAPK and the PI3K/PKB pathways in the control of cell identity and cellular growth. Essential for regulation of the cytoskeleton and cell growth but not for cell proliferation or growth rate. Required specifically for the microtubule-based basal transport of lipid droplets. Plays a partially redundant function downstream of Raf in cell fate specification in the developing eye. Pair-rule protein that regulates embryonic cellularization, gastrulation and segmentation. The sequence is that of AF4/FMR2 family member lilli from Drosophila grimshawi (Hawaiian fruit fly).